Reading from the N-terminus, the 182-residue chain is UPF0397 protein BCA_2731 (182 aa).

The next 5 helical transmembrane spans lie at 9-29 (VVAIGIGAALYGILGLWGFSI), 40-60 (AILTVFGALFGPVAGLLIGLI), 71-91 (WGIWWGWVISSGIIGFAMGLI), 114-134 (ITGLIGIVIAIIFAGAFDIIV), and 142-162 (IVIQVLGATIADVIVFLVLGL).

The protein belongs to the UPF0397 family.

Its subcellular location is the cell membrane. The chain is UPF0397 protein BCA_2731 from Bacillus cereus (strain 03BB102).